Here is a 144-residue protein sequence, read N- to C-terminus: 3-hydroxyacyl-[acyl-carrier-protein] dehydratase FabZ (144 aa).

His-49 is an active-site residue.

This sequence belongs to the thioester dehydratase family. FabZ subfamily.

It localises to the cytoplasm. It catalyses the reaction a (3R)-hydroxyacyl-[ACP] = a (2E)-enoyl-[ACP] + H2O. Its function is as follows. Involved in unsaturated fatty acids biosynthesis. Catalyzes the dehydration of short chain beta-hydroxyacyl-ACPs and long chain saturated and unsaturated beta-hydroxyacyl-ACPs. The sequence is that of 3-hydroxyacyl-[acyl-carrier-protein] dehydratase FabZ from Alkaliphilus oremlandii (strain OhILAs) (Clostridium oremlandii (strain OhILAs)).